The sequence spans 440 residues: MRRTLVYGLGESGEAATRALLQRGERPLAADAASGEGPRRVLEELGVEGVLGAGPEVLDGVDRVVVSPGVRPRDAVLREARRRGIPVISEVGLGLELLGPGVRVAAVTGTNGKTTVVDMARHILRVAGVAHAVAGNSWRALTGCLEEVRRAGVLVLEVSSFQLHHLPPPGFEVAALLNVRPDHLNWHSSFEEYARDKLRVFGGQGPGDLALLSADDPICRRAAGGLRAEVVLVGEGETGVRDGRLLLRGEFLAGERELGFAGGHNLKNALFAAAAAARLGAGLEAIREALRGYRLKPHRMQVVAEEGGVTYIDDSKATNPAAVAAALLSLGGRPAVLILGGSEKETDFEEVLPHLGGCRAVVCQGEAGPRLRDFLSERWGGEVVLAGDLASAVEAARRLARPGDAVLLSPGCASFDQFSGYEERGEAFARLAGGRRAVRG.

109–115 (GTNGKTT) is an ATP binding site.

The protein belongs to the MurCDEF family.

It is found in the cytoplasm. The catalysed reaction is UDP-N-acetyl-alpha-D-muramoyl-L-alanine + D-glutamate + ATP = UDP-N-acetyl-alpha-D-muramoyl-L-alanyl-D-glutamate + ADP + phosphate + H(+). It participates in cell wall biogenesis; peptidoglycan biosynthesis. Cell wall formation. Catalyzes the addition of glutamate to the nucleotide precursor UDP-N-acetylmuramoyl-L-alanine (UMA). This is UDP-N-acetylmuramoylalanine--D-glutamate ligase from Rubrobacter xylanophilus (strain DSM 9941 / JCM 11954 / NBRC 16129 / PRD-1).